The chain runs to 442 residues: Probable serine/threonine-protein kinase PBL17 (442 aa).

The N-myristoyl glycine moiety is linked to residue Gly2. Cys4 is lipidated: S-palmitoyl cysteine. Thr79 is modified (phosphothreonine). A Protein kinase domain is found at 90–370; sequence FRPDYILGEG…NHVVEVLETL (281 aa). Residues 96 to 104 and Lys125 contribute to the ATP site; that span reads LGEGGFGVV. Tyr170 carries the phosphotyrosine modification. Residue Asp220 is the Proton acceptor of the active site. The residue at position 254 (Ser254) is a Phosphoserine. Phosphothreonine is present on residues Thr255 and Thr260. Residue Tyr268 is modified to Phosphotyrosine. Residues 385 to 442 are disordered; the sequence is HSRGKSVTLYEASSDSQGTRDGNGQRRRRPESGRSKSEAAVDTEKYVSTLSEPDTTKI. Residues 395–406 are compositionally biased toward polar residues; that stretch reads EASSDSQGTRDG. The segment covering 414 to 429 has biased composition (basic and acidic residues); it reads PESGRSKSEAAVDTEK. Polar residues predominate over residues 430 to 442; the sequence is YVSTLSEPDTTKI.

It belongs to the protein kinase superfamily. Ser/Thr protein kinase family.

Its subcellular location is the cell membrane. The enzyme catalyses L-seryl-[protein] + ATP = O-phospho-L-seryl-[protein] + ADP + H(+). It catalyses the reaction L-threonyl-[protein] + ATP = O-phospho-L-threonyl-[protein] + ADP + H(+). Its function is as follows. May be involved in plant defense signaling. This is Probable serine/threonine-protein kinase PBL17 from Arabidopsis thaliana (Mouse-ear cress).